Here is a 213-residue protein sequence, read N- to C-terminus: ATP phosphoribosyltransferase (213 aa).

It belongs to the ATP phosphoribosyltransferase family. Short subfamily. Heteromultimer composed of HisG and HisZ subunits.

The protein localises to the cytoplasm. The catalysed reaction is 1-(5-phospho-beta-D-ribosyl)-ATP + diphosphate = 5-phospho-alpha-D-ribose 1-diphosphate + ATP. It participates in amino-acid biosynthesis; L-histidine biosynthesis; L-histidine from 5-phospho-alpha-D-ribose 1-diphosphate: step 1/9. In terms of biological role, catalyzes the condensation of ATP and 5-phosphoribose 1-diphosphate to form N'-(5'-phosphoribosyl)-ATP (PR-ATP). Has a crucial role in the pathway because the rate of histidine biosynthesis seems to be controlled primarily by regulation of HisG enzymatic activity. The polypeptide is ATP phosphoribosyltransferase (Teredinibacter turnerae (strain ATCC 39867 / T7901)).